The primary structure comprises 1238 residues: Protein MMS22-like (1238 aa).

The protein belongs to the MMS22 family. MMS22L subfamily. As to quaternary structure, component of the MMS22L-TONSL complex, a complex at least composed of MMS22L and TONSL/NFKBIL2. Interacts with RAD51; interaction is direct. Degraded by the ubiquitin-proteasome system upon replication stress.

It is found in the nucleus. The protein resides in the chromosome. In terms of biological role, component of the MMS22L-TONSL complex, a complex that promotes homologous recombination-mediated repair of double-strand breaks (DSBs) at stalled or collapsed replication forks. The MMS22L-TONSL complex is required to maintain genome integrity during DNA replication. It mediates the assembly of RAD51 filaments on single-stranded DNA (ssDNA): the MMS22L-TONSL complex is recruited to DSBs following histone replacement by histone chaperones and eviction of the replication protein A complex (RPA/RP-A) from DSBs. Following recruitment to DSBs, the TONSL-MMS22L complex promotes recruitment of RAD51 filaments and subsequent homologous recombination. Within the complex, MMS22L acts by binding ssDNA. The protein is Protein MMS22-like (Mms22l) of Mus musculus (Mouse).